The primary structure comprises 460 residues: Cysteine--tRNA ligase (460 aa).

Residue C27 coordinates Zn(2+). The short motif at 29–39 (PTVYDLIHVGN) is the 'HIGH' region element. Zn(2+)-binding residues include C207, H232, and E236. The short motif at 264–268 (KMSKS) is the 'KMSKS' region element. K267 is a binding site for ATP.

It belongs to the class-I aminoacyl-tRNA synthetase family. Monomer. Zn(2+) is required as a cofactor.

The protein resides in the cytoplasm. The catalysed reaction is tRNA(Cys) + L-cysteine + ATP = L-cysteinyl-tRNA(Cys) + AMP + diphosphate. This is Cysteine--tRNA ligase from Thermotoga petrophila (strain ATCC BAA-488 / DSM 13995 / JCM 10881 / RKU-1).